We begin with the raw amino-acid sequence, 483 residues long: Altronate oxidoreductase (483 aa).

18–29 (IIQFGEGNFLRA) is a binding site for NAD(+).

The protein belongs to the mannitol dehydrogenase family. UxaB subfamily.

It carries out the reaction D-altronate + NAD(+) = keto-D-tagaturonate + NADH + H(+). It functions in the pathway carbohydrate metabolism; pentose and glucuronate interconversion. The sequence is that of Altronate oxidoreductase from Escherichia coli O6:K15:H31 (strain 536 / UPEC).